The following is a 286-amino-acid chain: ATP synthase gamma chain (286 aa).

The protein belongs to the ATPase gamma chain family. In terms of assembly, F-type ATPases have 2 components, CF(1) - the catalytic core - and CF(0) - the membrane proton channel. CF(1) has five subunits: alpha(3), beta(3), gamma(1), delta(1), epsilon(1). CF(0) has three main subunits: a, b and c.

Its subcellular location is the cell inner membrane. Functionally, produces ATP from ADP in the presence of a proton gradient across the membrane. The gamma chain is believed to be important in regulating ATPase activity and the flow of protons through the CF(0) complex. This is ATP synthase gamma chain from Shewanella baltica (strain OS223).